Reading from the N-terminus, the 292-residue chain is Ribosomal RNA small subunit methyltransferase A (292 aa).

Asn-29, Leu-31, Gly-56, Glu-77, Asp-102, and Asn-127 together coordinate S-adenosyl-L-methionine.

This sequence belongs to the class I-like SAM-binding methyltransferase superfamily. rRNA adenine N(6)-methyltransferase family. RsmA subfamily.

The protein localises to the cytoplasm. It carries out the reaction adenosine(1518)/adenosine(1519) in 16S rRNA + 4 S-adenosyl-L-methionine = N(6)-dimethyladenosine(1518)/N(6)-dimethyladenosine(1519) in 16S rRNA + 4 S-adenosyl-L-homocysteine + 4 H(+). Functionally, specifically dimethylates two adjacent adenosines (A1518 and A1519) in the loop of a conserved hairpin near the 3'-end of 16S rRNA in the 30S particle. May play a critical role in biogenesis of 30S subunits. In Bacillus subtilis (strain 168), this protein is Ribosomal RNA small subunit methyltransferase A.